The chain runs to 365 residues: Heat-inducible transcription repressor HrcA (365 aa).

This sequence belongs to the HrcA family.

Its function is as follows. Negative regulator of class I heat shock genes (grpE-dnaK-dnaJ and groELS operons). Prevents heat-shock induction of these operons. In Trichormus variabilis (strain ATCC 29413 / PCC 7937) (Anabaena variabilis), this protein is Heat-inducible transcription repressor HrcA.